The chain runs to 330 residues: DNA-directed RNA polymerase subunit alpha (330 aa).

The interval 1 to 236 (MQGSVTEFLK…EQLDAFVDLR (236 aa)) is alpha N-terminal domain (alpha-NTD). The tract at residues 250–330 (FDPILLRPVD…NWPPASIAED (81 aa)) is alpha C-terminal domain (alpha-CTD).

This sequence belongs to the RNA polymerase alpha chain family. Homodimer. The RNAP catalytic core consists of 2 alpha, 1 beta, 1 beta' and 1 omega subunit. When a sigma factor is associated with the core the holoenzyme is formed, which can initiate transcription.

It carries out the reaction RNA(n) + a ribonucleoside 5'-triphosphate = RNA(n+1) + diphosphate. Its function is as follows. DNA-dependent RNA polymerase catalyzes the transcription of DNA into RNA using the four ribonucleoside triphosphates as substrates. This Vibrio campbellii (strain ATCC BAA-1116) protein is DNA-directed RNA polymerase subunit alpha.